A 250-amino-acid chain; its full sequence is Carboxy-S-adenosyl-L-methionine synthase (250 aa).

Residues Y45, 70-72 (GCS), 95-96 (DN), 123-124 (DI), N138, and R205 each bind S-adenosyl-L-methionine.

The protein belongs to the class I-like SAM-binding methyltransferase superfamily. Cx-SAM synthase family. Homodimer.

The enzyme catalyses prephenate + S-adenosyl-L-methionine = carboxy-S-adenosyl-L-methionine + 3-phenylpyruvate + H2O. Functionally, catalyzes the conversion of S-adenosyl-L-methionine (SAM) to carboxy-S-adenosyl-L-methionine (Cx-SAM). The sequence is that of Carboxy-S-adenosyl-L-methionine synthase from Marinobacter nauticus (strain ATCC 700491 / DSM 11845 / VT8) (Marinobacter aquaeolei).